The chain runs to 238 residues: Large ribosomal subunit protein uL2 (238 aa).

The segment covering Met-1–Gly-11 has biased composition (polar residues). 2 disordered regions span residues Met-1–His-22 and Phe-202–Gly-223.

This sequence belongs to the universal ribosomal protein uL2 family. Part of the 50S ribosomal subunit. Forms a bridge to the 30S subunit in the 70S ribosome.

Its function is as follows. One of the primary rRNA binding proteins. Required for association of the 30S and 50S subunits to form the 70S ribosome, for tRNA binding and peptide bond formation. It has been suggested to have peptidyltransferase activity; this is somewhat controversial. Makes several contacts with the 16S rRNA in the 70S ribosome. The sequence is that of Large ribosomal subunit protein uL2 from Methanosarcina mazei (strain ATCC BAA-159 / DSM 3647 / Goe1 / Go1 / JCM 11833 / OCM 88) (Methanosarcina frisia).